Consider the following 171-residue polypeptide: NADH-quinone oxidoreductase subunit I (171 aa).

2 consecutive 4Fe-4S ferredoxin-type domains span residues 41–71 and 81–110; these read LTRD…LQKT and EFFR…LTPD. Positions 51, 54, 57, 61, 90, 93, 96, and 100 each coordinate [4Fe-4S] cluster.

Belongs to the complex I 23 kDa subunit family. As to quaternary structure, NDH-1 is composed of 14 different subunits. Subunits NuoA, H, J, K, L, M, N constitute the membrane sector of the complex. Requires [4Fe-4S] cluster as cofactor.

It localises to the cell inner membrane. The enzyme catalyses a quinone + NADH + 5 H(+)(in) = a quinol + NAD(+) + 4 H(+)(out). In terms of biological role, NDH-1 shuttles electrons from NADH, via FMN and iron-sulfur (Fe-S) centers, to quinones in the respiratory chain. The immediate electron acceptor for the enzyme in this species is believed to be ubiquinone. Couples the redox reaction to proton translocation (for every two electrons transferred, four hydrogen ions are translocated across the cytoplasmic membrane), and thus conserves the redox energy in a proton gradient. In Methylococcus capsulatus (strain ATCC 33009 / NCIMB 11132 / Bath), this protein is NADH-quinone oxidoreductase subunit I.